A 683-amino-acid chain; its full sequence is Kinesin-like protein KIF2B (683 aa).

Thr-125 is modified (phosphothreonine; by PLK1). The stretch at 141–176 (LMTQRKSACLREIEKLQKQRERRRRLHREIRAQRAR) forms a coiled coil. Ser-204 is subject to Phosphoserine; by PLK1. Residues 213 to 543 (RICVCVRKRP…LRYANRVKEI (331 aa)) form the Kinesin motor domain. 303–310 (GQTGSGKT) contributes to the ATP binding site. Residues 640 to 672 (QLLSILEKKIDILTEIRRKLKLLQADIQKENRH) are a coiled coil.

It belongs to the TRAFAC class myosin-kinesin ATPase superfamily. Kinesin family. MCAK/KIF2 subfamily. Phosphorylation at Thr-125 by PLK1 is required for activity in the correction of kinetochore-microtubules attachment errors, while phosphorylation at Ser-204 also by PLK1 is required for the kinetochore localization and activity in prometaphase.

It is found in the cytoplasm. The protein resides in the cytoskeleton. Its subcellular location is the microtubule organizing center. The protein localises to the centrosome. It localises to the spindle. It is found in the chromosome. The protein resides in the centromere. Its subcellular location is the kinetochore. Plus end-directed microtubule-dependent motor required for spindle assembly and chromosome movement during mitosis. Has microtubule depolymerization activity. Plays a role in chromosome congression. This chain is Kinesin-like protein KIF2B, found in Bos taurus (Bovine).